The sequence spans 68 residues: Kasstasin (68 aa).

Residues 1 to 20 (MMKKSMLLLFFLGMVSFSLA) form the signal peptide. The propeptide occupies 21–44 (DDKREDEGEEKRADEGEEKRAAEE). The segment at 22–41 (DKREDEGEEKRADEGEEKRA) is disordered. Lysine amide is present on K67.

Belongs to the frog skin active peptide (FSAP) family. Brevinin subfamily. Expressed by the skin dorsal glands.

The protein localises to the secreted. Its function is as follows. Peptide with potent vasoconstrictor properties (EC50=25 pM). Has moderate antimicrobial activity against Gram-positive bacterium S.aureus (MIC=55 uM) and against Gram-negative bacterium E.coli (MIC=110 uM). Not active against fungus C.albicans. Has weak hemolytic activity against horse erythrocytes. The polypeptide is Kasstasin (Phlyctimantis maculatus (Red-legged running frog)).